Consider the following 159-residue polypeptide: Mesogenin-1 (159 aa).

The tract at residues 79–101 is disordered; it reads PGQARLPKGTKVRMSAQRRRKAS. Over residues 86 to 100 the composition is skewed to basic residues; it reads KGTKVRMSAQRRRKA. The bHLH domain maps to 95 to 149; it reads QRRRKASEREKLRMRTLADALHTLRNYLPPAYSQRGQPLTKIQTLKCTIKYISEL.

The protein resides in the nucleus. Involved in specifying the paraxial, but not dorsal, mesoderm. May regulate the expression of T-box transcription factors required for mesoderm formation and differentiation. The protein is Mesogenin-1 (MSGN1) of Gallus gallus (Chicken).